Consider the following 151-residue polypeptide: uncharacterized protein (151 aa).

This is an uncharacterized protein from Mycoplasma genitalium (strain ATCC 33530 / DSM 19775 / NCTC 10195 / G37) (Mycoplasmoides genitalium).